The following is a 322-amino-acid chain: 4-hydroxythreonine-4-phosphate dehydrogenase (322 aa).

Threonine 132 is a substrate binding site. A divalent metal cation contacts are provided by histidine 160, histidine 205, and histidine 260. Substrate is bound by residues lysine 268, asparagine 277, and arginine 286.

The protein belongs to the PdxA family. As to quaternary structure, homodimer. The cofactor is Zn(2+). Requires Mg(2+) as cofactor. It depends on Co(2+) as a cofactor.

It localises to the cytoplasm. It carries out the reaction 4-(phosphooxy)-L-threonine + NAD(+) = 3-amino-2-oxopropyl phosphate + CO2 + NADH. It functions in the pathway cofactor biosynthesis; pyridoxine 5'-phosphate biosynthesis; pyridoxine 5'-phosphate from D-erythrose 4-phosphate: step 4/5. Functionally, catalyzes the NAD(P)-dependent oxidation of 4-(phosphooxy)-L-threonine (HTP) into 2-amino-3-oxo-4-(phosphooxy)butyric acid which spontaneously decarboxylates to form 3-amino-2-oxopropyl phosphate (AHAP). The chain is 4-hydroxythreonine-4-phosphate dehydrogenase from Xanthomonas oryzae pv. oryzae (strain PXO99A).